Consider the following 101-residue polypeptide: MEDMITLTDERKTVKFENLPEIYVRVHDEAKGLVLTVKNPYDTDVYAKVYYAPDGENYDTVTSEVVKYDYQAQKTELIPIKHPYMKISFDSAVSGWVSYIK.

This is an uncharacterized protein from Methanocaldococcus jannaschii (strain ATCC 43067 / DSM 2661 / JAL-1 / JCM 10045 / NBRC 100440) (Methanococcus jannaschii).